Consider the following 307-residue polypeptide: Small ribosomal subunit biogenesis GTPase RsgA (307 aa).

The CP-type G domain maps to Gly-82–Val-240. GTP is bound by residues Asn-131–Asp-134 and Gly-182–Ser-190. Positions 264, 269, 271, and 277 each coordinate Zn(2+).

This sequence belongs to the TRAFAC class YlqF/YawG GTPase family. RsgA subfamily. As to quaternary structure, monomer. Associates with 30S ribosomal subunit, binds 16S rRNA. Requires Zn(2+) as cofactor.

The protein resides in the cytoplasm. Functionally, one of several proteins that assist in the late maturation steps of the functional core of the 30S ribosomal subunit. Helps release RbfA from mature subunits. May play a role in the assembly of ribosomal proteins into the subunit. Circularly permuted GTPase that catalyzes slow GTP hydrolysis, GTPase activity is stimulated by the 30S ribosomal subunit. In Gemmatimonas aurantiaca (strain DSM 14586 / JCM 11422 / NBRC 100505 / T-27), this protein is Small ribosomal subunit biogenesis GTPase RsgA.